The sequence spans 380 residues: Genome polyprotein (380 aa).

Disordered stretches follow at residues 54–154 (GTVD…TGKI) and 349–380 (GNVG…QQHH). The span at 67–84 (QGTTPPATGSGAKPATSG) shows a compositional bias: low complexity. 2 stretches are compositionally biased toward gly residues: residues 85–99 (AGSG…GVTG) and 106–123 (SGTG…GSGS). A compositionally biased stretch (low complexity) spans 129–140 (NTGSAGTNATGG).

Belongs to the potyviridae genome polyprotein family. Genome polyprotein of potyviruses undergoes post-translational proteolytic processing by the main proteinase NIa-pro resulting in the production of at least ten individual proteins. The P1 proteinase and the HC-pro cleave only their respective C-termini autocatalytically. 6K1 is essential for proper proteolytic separation of P3 from CI.

It localises to the virion. The enzyme catalyses RNA(n) + a ribonucleoside 5'-triphosphate = RNA(n+1) + diphosphate. Its function is as follows. An RNA-dependent RNA polymerase that plays an essential role in the virus replication. In terms of biological role, involved in aphid transmission, cell-to-cell and systemis movement, encapsidation of the viral RNA and in the regulation of viral RNA amplification. This Sorghum halepense (Johnson grass) protein is Genome polyprotein.